The chain runs to 164 residues: Transcription factor MafF (164 aa).

A basic motif region spans residues 51-76 (RLKQRRRTLKNRGYAASCRVKRVCQK). The region spanning 51 to 114 (RLKQRRRTLK…DALRGKCEAL (64 aa)) is the bZIP domain. Positions 79–93 (LQKQKSELEREVDKL) are leucine-zipper. The tract at residues 141–164 (KSTPGSGSGPAHGPDPAHGPASCS) is disordered. Over residues 149-164 (GPAHGPDPAHGPASCS) the composition is skewed to low complexity.

Belongs to the bZIP family. Maf subfamily. As to quaternary structure, monomer and homo- or heterodimer. Interacts with MIP. Forms high affinity heterodimers with members of the CNC-bZIP family such as NFE2L1/NRF1. In terms of tissue distribution, expressed in the term myometrium and kidney.

The protein resides in the nucleus. Functionally, since they lack a putative transactivation domain, the small Mafs behave as transcriptional repressors when they dimerize among themselves. However, they seem to serve as transcriptional activators by dimerizing with other (usually larger) basic-zipper proteins, such as NFE2L1/NRF1, and recruiting them to specific DNA-binding sites. Interacts with the upstream promoter region of the oxytocin receptor gene. May be a transcriptional enhancer in the up-regulation of the oxytocin receptor gene at parturition. The sequence is that of Transcription factor MafF (MAFF) from Homo sapiens (Human).